Here is a 100-residue protein sequence, read N- to C-terminus: Integration host factor subunit alpha (100 aa).

The tract at residues 54 to 73 (DLRDKRQRPGRNPKTGEEIP) is disordered.

The protein belongs to the bacterial histone-like protein family. In terms of assembly, heterodimer of an alpha and a beta chain.

This protein is one of the two subunits of integration host factor, a specific DNA-binding protein that functions in genetic recombination as well as in transcriptional and translational control. The polypeptide is Integration host factor subunit alpha (Pseudomonas aeruginosa (strain UCBPP-PA14)).